A 360-amino-acid chain; its full sequence is Glycerol-1-phosphate dehydrogenase [NAD(P)+] (360 aa).

Residues 108–112 (GRVID) and 130–133 (TAAS) each bind NAD(+). Aspartate 135 contacts substrate. Residue serine 139 participates in NAD(+) binding. Aspartate 182 is a binding site for substrate. 2 residues coordinate Zn(2+): aspartate 182 and histidine 262. Histidine 266 contributes to the substrate binding site. Residue histidine 278 coordinates Zn(2+).

The protein belongs to the glycerol-1-phosphate dehydrogenase family. Requires Zn(2+) as cofactor.

The protein resides in the cytoplasm. The enzyme catalyses sn-glycerol 1-phosphate + NAD(+) = dihydroxyacetone phosphate + NADH + H(+). It catalyses the reaction sn-glycerol 1-phosphate + NADP(+) = dihydroxyacetone phosphate + NADPH + H(+). The protein operates within membrane lipid metabolism; glycerophospholipid metabolism. Its function is as follows. Catalyzes the NAD(P)H-dependent reduction of dihydroxyacetonephosphate (DHAP or glycerone phosphate) to glycerol 1-phosphate (G1P). The G1P thus generated is used as the glycerophosphate backbone of phospholipids in the cellular membranes of Archaea. The sequence is that of Glycerol-1-phosphate dehydrogenase [NAD(P)+] from Methanoculleus marisnigri (strain ATCC 35101 / DSM 1498 / JR1).